Consider the following 68-residue polypeptide: Protein SlyX homolog (68 aa).

The protein belongs to the SlyX family.

The polypeptide is Protein SlyX homolog (Pseudomonas fluorescens (strain SBW25)).